The following is an 820-amino-acid chain: Probable ATP-dependent RNA helicase DDX23 (820 aa).

Over residues 1-42 the composition is skewed to basic and acidic residues; the sequence is MAGELADKKDRDASPSKEERKRSRTPDRERDRDRDRKSSPSK. The disordered stretch occupies residues 1 to 244; the sequence is MAGELADKKD…QKIREEKDKS (244 aa). 2 positions are modified to phosphoserine: Ser14 and Ser16. Over residues 43 to 65 the composition is skewed to basic residues; that stretch reads DRKRHRSRDRRRGGSRSRSRSRS. A compositionally biased stretch (basic and acidic residues) spans 66–105; that stretch reads KSAERERRHKERERDKERDRNKKDRDRDKDGHRRDKDRKR. Phosphoserine occurs at positions 107 and 109. 3 stretches are compositionally biased toward basic and acidic residues: residues 112–137, 147–226, and 233–244; these read RGKDFKSRKDRDSKKDEEDEHGDKKP, LLAK…RETN, and GRQKIREEKDKS. The Q motif motif lies at 391-419; that stretch reads RSWKDSSLPPHILEVIDKCGYKEPTPIQR. The Helicase ATP-binding domain occupies 422-627; the sequence is IPIGLQNRDI…RSYLRRPAVV (206 aa). An ATP-binding site is contributed by 435-442; sequence AETGSGKT. Residues 549-552 carry the DEAD box motif; sequence DEAD. Positions 651–799 constitute a Helicase C-terminal domain; that stretch reads KRKKLLAILE…SCPPELANHP (149 aa). Glycyl lysine isopeptide (Lys-Gly) (interchain with G-Cter in SUMO2) cross-links involve residues Lys686 and Lys811.

This sequence belongs to the DEAD box helicase family. DDX23/PRP28 subfamily. As to quaternary structure, the phosphorylated form (by SRPK2) is a component of the U4/U6-U5 tri-snRNP complex composed of the U4, U6 and U5 snRNAs and at least PRPF3, PRPF4, PRPF6, PRPF8, PRPF31, SNRNP200, TXNL4A, WDR57, SNRNP40, DDX23, CD2BP2, PPIH, SNU13, EFTUD2, SART1 and USP39. Identified in the spliceosome C complex. Interacts with ERBB4. Interacts with ERCC6. In terms of processing, in vitro phosphorylated by CLK1 and U1 snRNP-associated protein kinase. Phosphorylated by SRPK2 and this phosphorylation is required for its association with the tri-snRNP (U4/U6-U5 tri-small nuclear ribonucleoproteins) and subsequent spliceosomal B complex formation. May be phosphorylated by SRPK2 on Ser residues in the SR domain; the phosphorylation is required for the removal of inappropriate R-loops during transcription.

It is found in the nucleus. The protein resides in the chromosome. The enzyme catalyses ATP + H2O = ADP + phosphate + H(+). In terms of biological role, involved in pre-mRNA splicing and its phosphorylated form (by SRPK2) is required for spliceosomal B complex formation. Independently of its spliceosome formation function, required for the suppression of incorrect R-loops formed during transcription; R-loops are composed of a DNA:RNA hybrid and the associated non-template single-stranded DNA. This Homo sapiens (Human) protein is Probable ATP-dependent RNA helicase DDX23.